The primary structure comprises 40 residues: uncharacterized protein (40 aa).

The signal sequence occupies residues 1 to 27 (MFPADVILQCFGFSVGIALVGYVISLF).

This is an uncharacterized protein from Archaeoglobus fulgidus (strain ATCC 49558 / DSM 4304 / JCM 9628 / NBRC 100126 / VC-16).